The chain runs to 765 residues: Phosphoribosylformylglycinamidine synthase subunit PurL (765 aa).

His59 is an active-site residue. Residues Tyr62 and Lys104 each contribute to the ATP site. A Mg(2+)-binding site is contributed by Glu106. Substrate contacts are provided by residues 107–110 (SHNH) and Arg129. His108 serves as the catalytic Proton acceptor. Residue Asp130 coordinates Mg(2+). Position 254 (Gln254) interacts with substrate. Asp282 is a binding site for Mg(2+). 326 to 328 (ESQ) contacts substrate. The ATP site is built by Asn522 and Gly559. Asn560 is a binding site for Mg(2+). Ser562 provides a ligand contact to substrate.

It belongs to the FGAMS family. As to quaternary structure, monomer. Part of the FGAM synthase complex composed of 1 PurL, 1 PurQ and 2 PurS subunits.

It localises to the cytoplasm. It carries out the reaction N(2)-formyl-N(1)-(5-phospho-beta-D-ribosyl)glycinamide + L-glutamine + ATP + H2O = 2-formamido-N(1)-(5-O-phospho-beta-D-ribosyl)acetamidine + L-glutamate + ADP + phosphate + H(+). Its pathway is purine metabolism; IMP biosynthesis via de novo pathway; 5-amino-1-(5-phospho-D-ribosyl)imidazole from N(2)-formyl-N(1)-(5-phospho-D-ribosyl)glycinamide: step 1/2. Functionally, part of the phosphoribosylformylglycinamidine synthase complex involved in the purines biosynthetic pathway. Catalyzes the ATP-dependent conversion of formylglycinamide ribonucleotide (FGAR) and glutamine to yield formylglycinamidine ribonucleotide (FGAM) and glutamate. The FGAM synthase complex is composed of three subunits. PurQ produces an ammonia molecule by converting glutamine to glutamate. PurL transfers the ammonia molecule to FGAR to form FGAM in an ATP-dependent manner. PurS interacts with PurQ and PurL and is thought to assist in the transfer of the ammonia molecule from PurQ to PurL. This chain is Phosphoribosylformylglycinamidine synthase subunit PurL, found in Thermobifida fusca (strain YX).